The sequence spans 66 residues: Beta-mammal toxin Cv3 (66 aa).

The LCN-type CS-alpha/beta domain occupies 1 to 66 (KEGYIVNYYD…VWPLPNKTCN (66 aa)). Cystine bridges form between Cys12/Cys65, Cys16/Cys41, Cys25/Cys46, and Cys29/Cys48.

In terms of tissue distribution, expressed by the venom gland.

The protein localises to the secreted. Functionally, beta toxins bind voltage-independently at site-4 of sodium channels (Nav) and reduces peak current and shifts the voltage of activation toward more negative potentials thereby affecting sodium channel activation and promoting spontaneous and repetitive firing. This toxin is strongly toxic to mice. The sequence is that of Beta-mammal toxin Cv3 from Centruroides villegasi (Scorpion).